The chain runs to 423 residues: CinA-like protein (423 aa).

The protein belongs to the CinA family.

In Chlorobium phaeobacteroides (strain DSM 266 / SMG 266 / 2430), this protein is CinA-like protein.